We begin with the raw amino-acid sequence, 310 residues long: L-lactate dehydrogenase (310 aa).

NAD(+)-binding positions include Val11, Asp32, Tyr62, and 76–77 (GV). Substrate contacts are provided by residues Gln79, Arg85, and 117–120 (NPVD). NAD(+) contacts are provided by residues 115 to 117 (ASN) and Ser140. Substrate is bound at residue 145 to 148 (DTAR). The beta-D-fructose 1,6-bisphosphate site is built by Arg150 and His165. The active-site Proton acceptor is His172. Thr227 serves as a coordination point for substrate.

Belongs to the LDH/MDH superfamily. LDH family. Homotetramer.

Its subcellular location is the cytoplasm. It carries out the reaction (S)-lactate + NAD(+) = pyruvate + NADH + H(+). The protein operates within fermentation; pyruvate fermentation to lactate; (S)-lactate from pyruvate: step 1/1. Its activity is regulated as follows. Allosterically activated by fructose 1,6-bisphosphate (FBP). Functionally, catalyzes the conversion of lactate to pyruvate. The protein is L-lactate dehydrogenase of Allorhizobium ampelinum (strain ATCC BAA-846 / DSM 112012 / S4) (Agrobacterium vitis (strain S4)).